Reading from the N-terminus, the 224-residue chain is MASICTSNFHFLCRKNNSSPISHHLLLSPSSLSFSRCGGLRLCRCAAVKTGSEGGGIRSDNAELLRKPVISTELETTSESEELVKEESDDEVGKKSGDGEGWVDWEDQILEDTVPLVGFVRMILHSGKYAIGDRLSPDHQRTILQRLLPYHPECDKKIGPGVDYITVGYHPDFENSRCLFIVRKDGETVDFSYWKCIKGLIRKNYPLYADSFILRHFRKRRRND.

A chloroplast-targeting transit peptide spans 1–50 (MASICTSNFHFLCRKNNSSPISHHLLLSPSSLSFSRCGGLRLCRCAAVKT). The disordered stretch occupies residues 76 to 98 (TTSESEELVKEESDDEVGKKSGD). Positions 82–98 (ELVKEESDDEVGKKSGD) are enriched in basic and acidic residues.

It is found in the plastid. Its subcellular location is the chloroplast. In terms of biological role, has a function in the early stage of chloroplast development and palisade cell morphogenesis. Required for correct plastid ribosome assembly. Required for processing and maturation of 4.5S rRNA. The polypeptide is Protein DCL, chloroplastic (DCL) (Solanum lycopersicum (Tomato)).